A 302-amino-acid polypeptide reads, in one-letter code: Aspartate carbamoyltransferase catalytic subunit (302 aa).

2 residues coordinate carbamoyl phosphate: Arg-54 and Thr-55. Lys-82 provides a ligand contact to L-aspartate. The carbamoyl phosphate site is built by Arg-104, His-132, and Gln-135. The L-aspartate site is built by Arg-165 and Arg-217. Carbamoyl phosphate-binding residues include Gly-257 and Pro-258.

The protein belongs to the aspartate/ornithine carbamoyltransferase superfamily. ATCase family. As to quaternary structure, heterododecamer (2C3:3R2) of six catalytic PyrB chains organized as two trimers (C3), and six regulatory PyrI chains organized as three dimers (R2).

The catalysed reaction is carbamoyl phosphate + L-aspartate = N-carbamoyl-L-aspartate + phosphate + H(+). The protein operates within pyrimidine metabolism; UMP biosynthesis via de novo pathway; (S)-dihydroorotate from bicarbonate: step 2/3. Functionally, catalyzes the condensation of carbamoyl phosphate and aspartate to form carbamoyl aspartate and inorganic phosphate, the committed step in the de novo pyrimidine nucleotide biosynthesis pathway. This is Aspartate carbamoyltransferase catalytic subunit from Thermus thermophilus (strain ATCC BAA-163 / DSM 7039 / HB27).